The chain runs to 1244 residues: Putative late blight resistance protein homolog R1A-4 (1244 aa).

Coiled coils occupy residues 411–434 (RYSDSLAFLKNQLQVIQTEFESLQ) and 526–548 (PRMNEEIVGFKDVIENLRNQLLN). Positions 527-755 (RMNEEIVGFK…ECWEQVANDL (229 aa)) constitute an NB-ARC domain. 560–567 (GMPGLGKT) is an ATP binding site. 5 LRR repeats span residues 978–1004 (LWNLETLILNRRSVVHKILLPSTVWDM), 1079–1103 (PIRLEILKLYRSNAFKAIPFCISAP), 1127–1150 (LKNLEVLKLYYVEFGDHREWKVSN), 1153–1178 (FPQLKILKLEDVSLMKWIVADDAFPN), and 1213–1237 (ESVVKSAMNIQETQVEDYQNTNFKL).

This sequence belongs to the disease resistance NB-LRR family.

Its subcellular location is the cytoplasm. It is found in the membrane. Its function is as follows. Confers resistance to late blight (Phytophthora infestans) races carrying the avirulence gene Avr1. Resistance proteins guard the plant against pathogens that contain an appropriate avirulence protein via an indirect interaction with this avirulence protein. That triggers a defense system including the hypersensitive response, which restricts the pathogen growth. The chain is Putative late blight resistance protein homolog R1A-4 (R1A-4) from Solanum demissum (Wild potato).